Consider the following 486-residue polypeptide: Uridine/cytidine kinase UKL1, chloroplastic (486 aa).

Residues 1–47 constitute a chloroplast transit peptide; that stretch reads MPEDSSSLDYAMEKASGPHFSGLRFDGLLSSSPPNSSVVSSLRSAVS. Over residues 31 to 54 the composition is skewed to low complexity; that stretch reads SSPPNSSVVSSLRSAVSSSSPSSS. Positions 31 to 67 are disordered; it reads SSPPNSSVVSSLRSAVSSSSPSSSDPEAPKQPFIIGV. The tract at residues 59–264 is uridine kinase; sequence PKQPFIIGVS…ITQHIHTKLG (206 aa). The uracil phosphoribosyltransferase stretch occupies residues 274–486; the sequence is NVYVIQSTFQ…RYFGTDEEDQ (213 aa). Residues Lys298, Arg307, and 341–344 each bind GTP; that span reads CKKL. Positions 351 and 376 each coordinate 5-phospho-alpha-D-ribose 1-diphosphate. Arg396 is a GTP binding site. 5-phospho-alpha-D-ribose 1-diphosphate-binding positions include Asp402, 407-410, and Glu473; that span reads TGNS. Position 472–474 (472–474) interacts with uracil; it reads GEF.

In the N-terminal section; belongs to the uridine kinase family. The protein in the C-terminal section; belongs to the UPRTase family. Expressed in roots, leaves and stems.

It localises to the plastid. It is found in the chloroplast. Its subcellular location is the cytoplasm. The catalysed reaction is cytidine + ATP = CMP + ADP + H(+). The enzyme catalyses uridine + ATP = UMP + ADP + H(+). It functions in the pathway pyrimidine metabolism; CTP biosynthesis via salvage pathway; CTP from cytidine: step 1/3. The protein operates within pyrimidine metabolism; UMP biosynthesis via salvage pathway; UMP from uridine: step 1/1. Its function is as follows. Involved in the pyrimidine salvage pathway. Phosphorylates uridine to uridine monophosphate (UMP). Phosphorylates cytidine to cytidine monophosphate (CMP). Does not possess uracil phosphoribosyltransferase (UPRTase) activity that catalyzes the conversion of uracil and 5-phospho-alpha-D-ribose 1-diphosphate (PRPP) to UMP and diphosphate. This is Uridine/cytidine kinase UKL1, chloroplastic from Arabidopsis thaliana (Mouse-ear cress).